Here is a 225-residue protein sequence, read N- to C-terminus: Methylthioribulose-1-phosphate dehydratase (225 aa).

Residues His106 and His108 each coordinate Zn(2+).

Belongs to the aldolase class II family. MtnB subfamily. Zn(2+) is required as a cofactor.

It carries out the reaction 5-(methylsulfanyl)-D-ribulose 1-phosphate = 5-methylsulfanyl-2,3-dioxopentyl phosphate + H2O. Its pathway is amino-acid biosynthesis; L-methionine biosynthesis via salvage pathway; L-methionine from S-methyl-5-thio-alpha-D-ribose 1-phosphate: step 2/6. Its function is as follows. Catalyzes the dehydration of methylthioribulose-1-phosphate (MTRu-1-P) into 2,3-diketo-5-methylthiopentyl-1-phosphate (DK-MTP-1-P). The sequence is that of Methylthioribulose-1-phosphate dehydratase from Xanthomonas oryzae pv. oryzae (strain KACC10331 / KXO85).